Consider the following 100-residue polypeptide: Small ribosomal subunit protein uS14 (100 aa).

It belongs to the universal ribosomal protein uS14 family. In terms of assembly, part of the 30S ribosomal subunit. Contacts proteins S3 and S10.

Its function is as follows. Binds 16S rRNA, required for the assembly of 30S particles and may also be responsible for determining the conformation of the 16S rRNA at the A site. This chain is Small ribosomal subunit protein uS14, found in Trichodesmium erythraeum (strain IMS101).